We begin with the raw amino-acid sequence, 218 residues long: MARGNLSSAQMGLDLAPVAASVRFLCGVDEAGRGPLAGPVYAAAVVFDPAKPMLRGLADSKVLTASKREALYDKICERALGWHIAFATVEEIDTLNILHASMLAMQRAVQGLAEKGVTPDLVQVDGNRCPQVPFPVEAIVKGDSLVKAISAASILAKVARDRELLTLHEVYPQYGFDAHSGYPTPQHLAALAQFGATPHHRRSFAPVREAIARGLVAF.

Residues 23-216 enclose the RNase H type-2 domain; sequence RFLCGVDEAG…VREAIARGLV (194 aa). Residues D29, E30, and D125 each coordinate a divalent metal cation.

This sequence belongs to the RNase HII family. The cofactor is Mn(2+). Requires Mg(2+) as cofactor.

It localises to the cytoplasm. It carries out the reaction Endonucleolytic cleavage to 5'-phosphomonoester.. In terms of biological role, endonuclease that specifically degrades the RNA of RNA-DNA hybrids. In Cupriavidus pinatubonensis (strain JMP 134 / LMG 1197) (Cupriavidus necator (strain JMP 134)), this protein is Ribonuclease HII.